Consider the following 169-residue polypeptide: Ribosome maturation factor RimM (169 aa).

The 73-residue stretch at 97 to 169 (EDEYYWADLV…TITADWGLDY (73 aa)) folds into the PRC barrel domain.

It belongs to the RimM family. Binds ribosomal protein uS19.

The protein localises to the cytoplasm. An accessory protein needed during the final step in the assembly of 30S ribosomal subunit, possibly for assembly of the head region. Essential for efficient processing of 16S rRNA. May be needed both before and after RbfA during the maturation of 16S rRNA. It has affinity for free ribosomal 30S subunits but not for 70S ribosomes. The sequence is that of Ribosome maturation factor RimM from Neisseria gonorrhoeae (strain ATCC 700825 / FA 1090).